The sequence spans 119 residues: Large ribosomal subunit protein uL22c (119 aa).

This sequence belongs to the universal ribosomal protein uL22 family. As to quaternary structure, part of the 50S ribosomal subunit.

It localises to the plastid. It is found in the chloroplast. Functionally, this protein binds specifically to 23S rRNA. In terms of biological role, the globular domain of the protein is located near the polypeptide exit tunnel on the outside of the subunit, while an extended beta-hairpin is found that lines the wall of the exit tunnel in the center of the 70S ribosome. This is Large ribosomal subunit protein uL22c (rpl22) from Spirogyra maxima (Green alga).